The chain runs to 312 residues: Ribonuclease Z (312 aa).

Zn(2+)-binding residues include H61, H63, D65, H66, H148, D216, and H275. The active-site Proton acceptor is D65.

This sequence belongs to the RNase Z family. In terms of assembly, homodimer. It depends on Zn(2+) as a cofactor.

It carries out the reaction Endonucleolytic cleavage of RNA, removing extra 3' nucleotides from tRNA precursor, generating 3' termini of tRNAs. A 3'-hydroxy group is left at the tRNA terminus and a 5'-phosphoryl group is left at the trailer molecule.. In terms of biological role, zinc phosphodiesterase, which displays some tRNA 3'-processing endonuclease activity. Probably involved in tRNA maturation, by removing a 3'-trailer from precursor tRNA. The protein is Ribonuclease Z of Clostridium tetani (strain Massachusetts / E88).